Consider the following 204-residue polypeptide: tRNA (guanine-N(7)-)-methyltransferase (204 aa).

3 residues coordinate S-adenosyl-L-methionine: glutamate 36, glutamate 61, and aspartate 111. Residue aspartate 111 is part of the active site. Residues lysine 115, aspartate 147, and 177 to 180 (TRFE) contribute to the substrate site.

It belongs to the class I-like SAM-binding methyltransferase superfamily. TrmB family.

It catalyses the reaction guanosine(46) in tRNA + S-adenosyl-L-methionine = N(7)-methylguanosine(46) in tRNA + S-adenosyl-L-homocysteine. The protein operates within tRNA modification; N(7)-methylguanine-tRNA biosynthesis. Catalyzes the formation of N(7)-methylguanine at position 46 (m7G46) in tRNA. In Chlorobium phaeobacteroides (strain DSM 266 / SMG 266 / 2430), this protein is tRNA (guanine-N(7)-)-methyltransferase.